A 380-amino-acid chain; its full sequence is Cytochrome b (380 aa).

4 helical membrane-spanning segments follow: residues 33–53, 77–98, 113–133, and 178–198; these read FGSL…FLAM, WFIR…YLHI, WTIG…GYVL, and FFTF…VHLL. Positions 83 and 97 each coordinate heme b. Positions 182 and 196 each coordinate heme b. Residue His201 participates in a ubiquinone binding. The next 4 helical transmembrane spans lie at 226–246, 288–308, 320–340, and 347–367; these read YKDL…ALFS, LGGV…PILH, LTQT…WIGG, and FVII…VLAP.

The protein belongs to the cytochrome b family. As to quaternary structure, the cytochrome bc1 complex contains 3 respiratory subunits (MT-CYB, CYC1 and UQCRFS1), 2 core proteins (UQCRC1 and UQCRC2) and probably 6 low-molecular weight proteins. Heme b is required as a cofactor.

It is found in the mitochondrion inner membrane. In terms of biological role, component of the ubiquinol-cytochrome c reductase complex (complex III or cytochrome b-c1 complex) that is part of the mitochondrial respiratory chain. The b-c1 complex mediates electron transfer from ubiquinol to cytochrome c. Contributes to the generation of a proton gradient across the mitochondrial membrane that is then used for ATP synthesis. This is Cytochrome b (mt-cyb) from Lampris guttatus (Opah).